The following is a 491-amino-acid chain: Lysine--tRNA ligase (491 aa).

The Mg(2+) site is built by Glu-399 and Glu-406.

The protein belongs to the class-II aminoacyl-tRNA synthetase family. As to quaternary structure, homodimer. The cofactor is Mg(2+).

The protein resides in the cytoplasm. The enzyme catalyses tRNA(Lys) + L-lysine + ATP = L-lysyl-tRNA(Lys) + AMP + diphosphate. The sequence is that of Lysine--tRNA ligase from Chloroflexus aurantiacus (strain ATCC 29366 / DSM 635 / J-10-fl).